The primary structure comprises 1361 residues: DNA-directed RNA polymerase subunit beta'' (1361 aa).

Cysteine 224, cysteine 295, cysteine 302, and cysteine 305 together coordinate Zn(2+).

This sequence belongs to the RNA polymerase beta' chain family. RpoC2 subfamily. In plastids the minimal PEP RNA polymerase catalytic core is composed of four subunits: alpha, beta, beta', and beta''. When a (nuclear-encoded) sigma factor is associated with the core the holoenzyme is formed, which can initiate transcription. The cofactor is Zn(2+).

It localises to the plastid. The protein localises to the chloroplast. It catalyses the reaction RNA(n) + a ribonucleoside 5'-triphosphate = RNA(n+1) + diphosphate. In terms of biological role, DNA-dependent RNA polymerase catalyzes the transcription of DNA into RNA using the four ribonucleoside triphosphates as substrates. This is DNA-directed RNA polymerase subunit beta'' from Spinacia oleracea (Spinach).